A 253-amino-acid polypeptide reads, in one-letter code: MSGSRKFFVGGNWKMNGSRDDNDKLLKLLSEAHFDDNTEVLIAPPSVFLHEIRKSLKKEIHVAAQNCYKVSKGAFTGEISPAMIRDIGCDWVILGHSERRNIFGESDELIAEKVQHALAEGLSVIACIGETLSERESNKTEEVCVRQLKAIANKIKSADEWKRVVVAYEPVWAIGTGKVATPQQAQEVHNFLRKWFKTNAPNGVDEKIRIIYGGSVTAANCKELAQQHDVDGFLVGGASLKPEFTEICKARQR.

Residues Asn12 and Lys14 each coordinate substrate. The Electrophile role is filled by His96. Glu169 serves as the catalytic Proton acceptor.

Belongs to the triosephosphate isomerase family. Homodimer.

Its subcellular location is the cytoplasm. It carries out the reaction D-glyceraldehyde 3-phosphate = dihydroxyacetone phosphate. Its pathway is carbohydrate biosynthesis; gluconeogenesis. The protein operates within carbohydrate degradation; glycolysis; D-glyceraldehyde 3-phosphate from glycerone phosphate: step 1/1. Functionally, antigen to the host M.1 monoclonal antibody. This is Triosephosphate isomerase (TPI) from Schistosoma mansoni (Blood fluke).